Consider the following 597-residue polypeptide: Proteasome-associated ATPase (597 aa).

The segment covering 1–12 (MQHDRPGSRPEE) has biased composition (basic and acidic residues). A disordered region spans residues 1 to 22 (MQHDRPGSRPEEGGEQQIGGDA). A coiled-coil region spans residues 21–97 (DAELNSQIRL…REEVDRLAQP (77 aa)). 284–289 (GCGKTL) provides a ligand contact to ATP. The segment at 596 to 597 (YL) is docks into pockets in the proteasome alpha-ring.

The protein belongs to the AAA ATPase family. Homohexamer. Assembles into a hexameric ring structure that caps the 20S proteasome core. Strongly interacts with the prokaryotic ubiquitin-like protein Pup through a hydrophobic interface; the interacting region of ARC lies in its N-terminal coiled-coil domain. There is one Pup binding site per ARC hexamer ring. Upon ATP-binding, the C-terminus of ARC interacts with the alpha-rings of the proteasome core, possibly by binding to the intersubunit pockets.

Its pathway is protein degradation; proteasomal Pup-dependent pathway. ATPase which is responsible for recognizing, binding, unfolding and translocation of pupylated proteins into the bacterial 20S proteasome core particle. May be essential for opening the gate of the 20S proteasome via an interaction with its C-terminus, thereby allowing substrate entry and access to the site of proteolysis. Thus, the C-termini of the proteasomal ATPase may function like a 'key in a lock' to induce gate opening and therefore regulate proteolysis. The chain is Proteasome-associated ATPase from Saccharopolyspora erythraea (strain ATCC 11635 / DSM 40517 / JCM 4748 / NBRC 13426 / NCIMB 8594 / NRRL 2338).